Reading from the N-terminus, the 110-residue chain is U1-lycotoxin-Ls1mm (110 aa).

Positions 1–20 (MKFVLLFGVLLVTLFSYSSA) are cleaved as a signal peptide. A propeptide spanning residues 21–44 (EMLDDFDQADEDELLSLIEKEEAR) is cleaved from the precursor. Cystine bridges form between Cys47–Cys62, Cys54–Cys71, Cys61–Cys89, and Cys73–Cys87.

It belongs to the neurotoxin 19 (CSTX) family. 03 subfamily. As to expression, expressed by the venom gland.

Its subcellular location is the secreted. The polypeptide is U1-lycotoxin-Ls1mm (Lycosa singoriensis (Wolf spider)).